The sequence spans 414 residues: Chromobox protein homolog 6 (414 aa).

In terms of domain architecture, Chromo spans Phe11 to Pro69. Ser107 carries the post-translational modification Phosphoserine. Disordered regions lie at residues His127–Pro152, Ala267–Trp308, and Ala344–Ser365. Low complexity predominate over residues Ala267–Ser287.

In terms of assembly, component of a PRC1-like complex. Distinct PRC1-like core complexes are composed of a RING1 subunit (RING1B or RING1A), one of the six PCGF proteins (PCGF1-6), one PHC protein (PHC1-3) and one of the CBX proteins (CBX2, CBX4, CBX6, CBX7 or CBX8). Interacts with PCGF1, PCGF2, PCGF3, BMI1, PCGF5, PCGF6, RING1 and RNF2. May interact with H3C15 and H3C1. Interacts (via chromodomain) with single-stranded RNA (ssRNA). In terms of processing, ubiquitinated. Ubiquitination regulates the function of the Polycomb group (PcG) multiprotein PRC1-like complex. Deubiquitinated by USP26. Expressed in mouse embryonic stem cells.

Its subcellular location is the nucleus. The protein resides in the chromosome. In terms of biological role, component of a Polycomb group (PcG) multiprotein PRC1-like complex, a complex class required to maintain the transcriptionally repressive state of many genes, including Hox genes, throughout development. PcG PRC1 complex acts via chromatin remodeling and modification of histones; it mediates monoubiquitination of histone H2A 'Lys-119', rendering chromatin heritably changed in its expressibility. Possibly contributes to the target selectivity of the PRC1 complex by binding specific regions of chromatin. Recruitment to chromatin might occur in an H3K27me3-independent fashion. May have a PRC1-independent function in embryonic stem cells. This Mus musculus (Mouse) protein is Chromobox protein homolog 6 (Cbx6).